A 294-amino-acid chain; its full sequence is Elongation factor Ts, mitochondrial 2 (294 aa).

This sequence belongs to the EF-Ts family.

It localises to the mitochondrion. Functionally, associates with the EF-Tu.GDP complex and induces the exchange of GDP to GTP. It remains bound to the aminoacyl-tRNA.EF-Tu.GTP complex up to the GTP hydrolysis stage on the ribosome. The chain is Elongation factor Ts, mitochondrial 2 from Paramecium tetraurelia.